We begin with the raw amino-acid sequence, 320 residues long: Cytochrome f (320 aa).

A signal peptide spans 1-35 (MQTRKTFSWIKEQITRSISASLMIYIITRTSISSA). Heme contacts are provided by Tyr-36, Cys-56, Cys-59, and His-60. Residues 286 to 306 (VQGLLFFLASVILAQIFLVLK) form a helical membrane-spanning segment.

The protein belongs to the cytochrome f family. The 4 large subunits of the cytochrome b6-f complex are cytochrome b6, subunit IV (17 kDa polypeptide, petD), cytochrome f and the Rieske protein, while the 4 small subunits are PetG, PetL, PetM and PetN. The complex functions as a dimer. The cofactor is heme.

It localises to the plastid. Its subcellular location is the chloroplast thylakoid membrane. Component of the cytochrome b6-f complex, which mediates electron transfer between photosystem II (PSII) and photosystem I (PSI), cyclic electron flow around PSI, and state transitions. In Panax ginseng (Korean ginseng), this protein is Cytochrome f.